The sequence spans 430 residues: MAFEFRLPDIGEGIHEGEIVKWFVKAGDTIEEDDVLAEVQNDKSVVEIPSPVSGTVEEVMVEEGTVAVVGDVIVKIDAPDAEDMQFKGHDDDSSSKEEPAKEEAPAEQAPVATQTEEVDENRTVKAMPSVRKYAREKGVNIKAVSGSGKNGRITKEDVDAYLNGGAPTASNESAASATSEEVAETPAAPAAVSLEGDFPETTEKIPAMRRAIAKAMVNSKHTAPHVTLMDEIDVQALWDHRKKFKEIAAEQGTKLTFLPYVVKALVSALKKYPALNTSFNEEAGEIVHKHYWNIGIAADTDRGLLVPVVKHADRKSIFQISDEINELAVKARDGKLTADEMKGATCTISNIGSAGGQWFTPVINHPEVAILGIGRIAQKPIVKDGEIVAAPVLALSLSFDHRQIDGATGQNAMNHIKRLLNNPELLLMEG.

Positions 2–77 constitute a Lipoyl-binding domain; sequence AFEFRLPDIG…VVGDVIVKID (76 aa). N6-lipoyllysine is present on K43. A disordered region spans residues 80–122; the sequence is DAEDMQFKGHDDDSSSKEEPAKEEAPAEQAPVATQTEEVDENR. Positions 84 to 104 are enriched in basic and acidic residues; the sequence is MQFKGHDDDSSSKEEPAKEEA. The Peripheral subunit-binding (PSBD) domain occupies 125–162; it reads KAMPSVRKYAREKGVNIKAVSGSGKNGRITKEDVDAYL. Positions 164 to 199 are disordered; it reads GGAPTASNESAASATSEEVAETPAAPAAVSLEGDFP. Residues 166-193 show a composition bias toward low complexity; it reads APTASNESAASATSEEVAETPAAPAAVS. H401 is a catalytic residue.

It belongs to the 2-oxoacid dehydrogenase family. Forms a 24-polypeptide structural core with octahedral symmetry. The cofactor is (R)-lipoate.

The catalysed reaction is N(6)-[(R)-dihydrolipoyl]-L-lysyl-[protein] + acetyl-CoA = N(6)-[(R)-S(8)-acetyldihydrolipoyl]-L-lysyl-[protein] + CoA. The pyruvate dehydrogenase complex catalyzes the overall conversion of pyruvate to acetyl-CoA and CO(2). It contains multiple copies of three enzymatic components: pyruvate dehydrogenase (E1), dihydrolipoamide acetyltransferase (E2) and lipoamide dehydrogenase (E3). This Staphylococcus aureus (strain Mu50 / ATCC 700699) protein is Dihydrolipoyllysine-residue acetyltransferase component of pyruvate dehydrogenase complex (pdhC).